An 85-amino-acid chain; its full sequence is UPF0181 protein YE1782 (85 aa).

2 disordered regions span residues 1 to 22 and 57 to 85; these read MLAG…RIHQ and DTDF…PYEG. The span at 9–21 shows a compositional bias: basic and acidic residues; it reads SHEEQQEAVERIH. Residues 74-85 show a composition bias toward acidic residues; sequence QDADEIEDPYEG.

This sequence belongs to the UPF0181 family.

In Yersinia enterocolitica serotype O:8 / biotype 1B (strain NCTC 13174 / 8081), this protein is UPF0181 protein YE1782.